The sequence spans 273 residues: Type II pantothenate kinase (273 aa).

8–15 (DAGGTLTK) contacts ATP. Glu76 functions as the Proton acceptor in the catalytic mechanism. ATP contacts are provided by residues Thr105, 127–131 (GGTIM), Phe143, and Ser230.

The protein belongs to the type II pantothenate kinase family. Homodimer.

Its subcellular location is the cytoplasm. The enzyme catalyses (R)-pantothenate + ATP = (R)-4'-phosphopantothenate + ADP + H(+). It functions in the pathway cofactor biosynthesis; coenzyme A biosynthesis; CoA from (R)-pantothenate: step 1/5. Catalyzes the phosphorylation of pantothenate (Pan), the first step in CoA biosynthesis. This chain is Type II pantothenate kinase, found in Bacillus cereus (strain ATCC 14579 / DSM 31 / CCUG 7414 / JCM 2152 / NBRC 15305 / NCIMB 9373 / NCTC 2599 / NRRL B-3711).